The following is a 126-amino-acid chain: uncharacterized protein (126 aa).

The helical transmembrane segment at 48 to 68 (ILCMFPWQCVVYVFSNFVWLV) threads the bilayer.

It localises to the membrane. This is an uncharacterized protein from Homo sapiens (Human).